The following is a 170-amino-acid chain: Crossover junction endodeoxyribonuclease RuvC (170 aa).

Residues Asp-9, Glu-70, and Asp-145 contribute to the active site. Residues Asp-9, Glu-70, and Asp-145 each coordinate Mg(2+).

The protein belongs to the RuvC family. In terms of assembly, homodimer which binds Holliday junction (HJ) DNA. The HJ becomes 2-fold symmetrical on binding to RuvC with unstacked arms; it has a different conformation from HJ DNA in complex with RuvA. In the full resolvosome a probable DNA-RuvA(4)-RuvB(12)-RuvC(2) complex forms which resolves the HJ. It depends on Mg(2+) as a cofactor.

It localises to the cytoplasm. The enzyme catalyses Endonucleolytic cleavage at a junction such as a reciprocal single-stranded crossover between two homologous DNA duplexes (Holliday junction).. Functionally, the RuvA-RuvB-RuvC complex processes Holliday junction (HJ) DNA during genetic recombination and DNA repair. Endonuclease that resolves HJ intermediates. Cleaves cruciform DNA by making single-stranded nicks across the HJ at symmetrical positions within the homologous arms, yielding a 5'-phosphate and a 3'-hydroxyl group; requires a central core of homology in the junction. The consensus cleavage sequence is 5'-(A/T)TT(C/G)-3'. Cleavage occurs on the 3'-side of the TT dinucleotide at the point of strand exchange. HJ branch migration catalyzed by RuvA-RuvB allows RuvC to scan DNA until it finds its consensus sequence, where it cleaves and resolves the cruciform DNA. This is Crossover junction endodeoxyribonuclease RuvC from Chlamydia trachomatis serovar L2 (strain ATCC VR-902B / DSM 19102 / 434/Bu).